Here is a 388-residue protein sequence, read N- to C-terminus: Succinate--CoA ligase [ADP-forming] subunit beta (388 aa).

The 236-residue stretch at 9 to 244 folds into the ATP-grasp domain; the sequence is KQLFAEYGLP…PSQDDPREAH (236 aa). Residues Lys46, 53 to 55, Glu99, Thr102, and Glu107 contribute to the ATP site; that span reads GRG. Mg(2+) is bound by residues Asn199 and Asp213. Substrate is bound by residues Asn264 and 321 to 323; that span reads GIV.

The protein belongs to the succinate/malate CoA ligase beta subunit family. In terms of assembly, heterotetramer of two alpha and two beta subunits. Mg(2+) is required as a cofactor.

It catalyses the reaction succinate + ATP + CoA = succinyl-CoA + ADP + phosphate. The enzyme catalyses GTP + succinate + CoA = succinyl-CoA + GDP + phosphate. It participates in carbohydrate metabolism; tricarboxylic acid cycle; succinate from succinyl-CoA (ligase route): step 1/1. Succinyl-CoA synthetase functions in the citric acid cycle (TCA), coupling the hydrolysis of succinyl-CoA to the synthesis of either ATP or GTP and thus represents the only step of substrate-level phosphorylation in the TCA. The beta subunit provides nucleotide specificity of the enzyme and binds the substrate succinate, while the binding sites for coenzyme A and phosphate are found in the alpha subunit. This chain is Succinate--CoA ligase [ADP-forming] subunit beta, found in Pseudomonas syringae pv. tomato (strain ATCC BAA-871 / DC3000).